The chain runs to 113 residues: Hydrogenase maturation factor HypA (113 aa).

His-2 is a binding site for Ni(2+). 4 residues coordinate Zn(2+): Cys-73, Cys-76, Cys-89, and Cys-92.

It belongs to the HypA/HybF family.

In terms of biological role, involved in the maturation of [NiFe] hydrogenases. Required for nickel insertion into the metal center of the hydrogenase. The protein is Hydrogenase maturation factor HypA of Moorella thermoacetica (strain ATCC 39073 / JCM 9320).